A 123-amino-acid polypeptide reads, in one-letter code: Alpha-lactalbumin B/C (123 aa).

The 123-residue stretch at lysine 1–leucine 123 folds into the C-type lysozyme domain. 4 disulfide bridges follow: cysteine 6/cysteine 120, cysteine 28/cysteine 111, cysteine 61/cysteine 77, and cysteine 73/cysteine 91. Residues lysine 79, aspartate 82, aspartate 84, aspartate 87, and aspartate 88 each coordinate Ca(2+).

Belongs to the glycosyl hydrolase 22 family. In terms of assembly, lactose synthase (LS) is a heterodimer of a catalytic component, beta1,4-galactosyltransferase (beta4Gal-T1) and a regulatory component, alpha-lactalbumin (LA). Mammary gland specific. Secreted in milk.

The protein localises to the secreted. In terms of biological role, regulatory subunit of lactose synthase, changes the substrate specificity of galactosyltransferase in the mammary gland making glucose a good acceptor substrate for this enzyme. This enables LS to synthesize lactose, the major carbohydrate component of milk. In other tissues, galactosyltransferase transfers galactose onto the N-acetylglucosamine of the oligosaccharide chains in glycoproteins. This is Alpha-lactalbumin B/C from Equus caballus (Horse).